We begin with the raw amino-acid sequence, 210 residues long: Large ribosomal subunit protein uL4 (210 aa).

Positions Q46–I89 are disordered. Over residues G60–G71 the composition is skewed to basic residues.

This sequence belongs to the universal ribosomal protein uL4 family. In terms of assembly, part of the 50S ribosomal subunit.

In terms of biological role, one of the primary rRNA binding proteins, this protein initially binds near the 5'-end of the 23S rRNA. It is important during the early stages of 50S assembly. It makes multiple contacts with different domains of the 23S rRNA in the assembled 50S subunit and ribosome. Its function is as follows. Forms part of the polypeptide exit tunnel. The chain is Large ribosomal subunit protein uL4 from Prochlorococcus marinus (strain MIT 9215).